Reading from the N-terminus, the 478-residue chain is G2/mitotic-specific cyclin-B (478 aa).

The interval Met-1–Arg-153 is disordered. The span at Ala-16–Ala-31 shows a compositional bias: low complexity. Over residues Asp-65–Lys-74 the composition is skewed to basic and acidic residues. Polar residues predominate over residues Ser-77–Arg-102. Positions Asn-110–Arg-121 are enriched in basic and acidic residues. Residues Lys-133–Thr-145 show a composition bias toward polar residues.

This sequence belongs to the cyclin family. Cyclin AB subfamily.

Functionally, essential for the control of the cell cycle at the G2/M (mitosis) transition. Interacts with the CDC2 protein kinase to form MPF. G2/M cyclins accumulate steadily during G2 and are abruptly destroyed at mitosis. The chain is G2/mitotic-specific cyclin-B (nimE) from Emericella nidulans (strain FGSC A4 / ATCC 38163 / CBS 112.46 / NRRL 194 / M139) (Aspergillus nidulans).